The chain runs to 374 residues: Putative phosphoserine aminotransferase (374 aa).

Arg48 lines the L-glutamate pocket. Pyridoxal 5'-phosphate contacts are provided by residues 82–83 (AT), Phe106, Thr152, Asp174, and Gln197. The residue at position 198 (Lys198) is an N6-(pyridoxal phosphate)lysine. 249 to 250 (NT) lines the pyridoxal 5'-phosphate pocket.

The protein belongs to the class-V pyridoxal-phosphate-dependent aminotransferase family. SerC subfamily. As to quaternary structure, homodimer. It depends on pyridoxal 5'-phosphate as a cofactor.

Its subcellular location is the cytoplasm. It carries out the reaction O-phospho-L-serine + 2-oxoglutarate = 3-phosphooxypyruvate + L-glutamate. The catalysed reaction is 4-(phosphooxy)-L-threonine + 2-oxoglutarate = (R)-3-hydroxy-2-oxo-4-phosphooxybutanoate + L-glutamate. Its pathway is amino-acid biosynthesis; L-serine biosynthesis; L-serine from 3-phospho-D-glycerate: step 2/3. It participates in cofactor biosynthesis; pyridoxine 5'-phosphate biosynthesis; pyridoxine 5'-phosphate from D-erythrose 4-phosphate: step 3/5. Catalyzes the reversible conversion of 3-phosphohydroxypyruvate to phosphoserine and of 3-hydroxy-2-oxo-4-phosphonooxybutanoate to phosphohydroxythreonine. This is Putative phosphoserine aminotransferase from Mycolicibacterium paratuberculosis (strain ATCC BAA-968 / K-10) (Mycobacterium paratuberculosis).